A 39-amino-acid polypeptide reads, in one-letter code: Photosystem II reaction center protein X (39 aa).

A helical membrane pass occupies residues Ser11–Ser31.

Belongs to the PsbX family. Type 1 subfamily. In terms of assembly, PSII is composed of 1 copy each of membrane proteins PsbA, PsbB, PsbC, PsbD, PsbE, PsbF, PsbH, PsbI, PsbJ, PsbK, PsbL, PsbM, PsbT, PsbX, PsbY, PsbZ, Psb30/Ycf12, at least 3 peripheral proteins of the oxygen-evolving complex and a large number of cofactors. It forms dimeric complexes.

It localises to the plastid. Its subcellular location is the cyanelle thylakoid membrane. In terms of biological role, involved in the binding and/or turnover of quinones at the Q(B) site of photosystem II (PSII). PSII is a light-driven water plastoquinone oxidoreductase, using light energy to abstract electrons from H(2)O, generating a proton gradient subsequently used for ATP formation. The polypeptide is Photosystem II reaction center protein X (Cyanophora paradoxa).